The sequence spans 118 residues: Basic phospholipase A2 acanthin-2 (118 aa).

Cystine bridges form between cysteine 11/cysteine 71, cysteine 27/cysteine 117, cysteine 29/cysteine 45, cysteine 44/cysteine 98, cysteine 51/cysteine 91, cysteine 60/cysteine 84, and cysteine 78/cysteine 89. Ca(2+)-binding residues include tyrosine 28, glycine 30, and glycine 32. Residue histidine 48 is part of the active site. Aspartate 49 contacts Ca(2+). Aspartate 92 is a catalytic residue.

Ca(2+) is required as a cofactor. As to expression, expressed by the venom gland.

Its subcellular location is the secreted. It carries out the reaction a 1,2-diacyl-sn-glycero-3-phosphocholine + H2O = a 1-acyl-sn-glycero-3-phosphocholine + a fatty acid + H(+). Snake venom phospholipase A2 (PLA2) that potently inhibits ADP-(IC(50)=12 nM) and collagen-induced (IC(50)=4 nM) platelet aggregation when tested on human whole blood. PLA2 catalyzes the calcium-dependent hydrolysis of the 2-acyl groups in 3-sn-phosphoglycerides. The sequence is that of Basic phospholipase A2 acanthin-2 from Acanthophis antarcticus (Common death adder).